The chain runs to 429 residues: Divergent protein kinase domain 2A (429 aa).

Positions 1 to 34 are cleaved as a signal peptide; the sequence is MLRLASLKFGRLFRYAKVLFAASLLVVMLLNTHS.

The protein belongs to the DIPK family.

The protein resides in the cytoplasmic vesicle. It localises to the COPI-coated vesicle. The protein localises to the golgi apparatus. It is found in the secreted. May play a role in cardiomyocyte proliferation through paracrine signaling and activation of the PPI3K-AKT-CDK7 signaling cascade. This chain is Divergent protein kinase domain 2A (dipk2a), found in Xenopus tropicalis (Western clawed frog).